The following is a 391-amino-acid chain: Transposase for insertion sequence element IS905 (391 aa).

It belongs to the transposase mutator family.

In terms of biological role, required for the transposition of the insertion element. The chain is Transposase for insertion sequence element IS905 (tra905) from Lactococcus lactis subsp. lactis (strain IL1403) (Streptococcus lactis).